A 188-amino-acid polypeptide reads, in one-letter code: Acireductone dioxygenase (188 aa).

Residues His97, His99, Glu103, and His141 each contribute to the Fe(2+) site. His97, His99, Glu103, and His141 together coordinate Ni(2+).

It belongs to the acireductone dioxygenase (ARD) family. In terms of assembly, monomer. It depends on Fe(2+) as a cofactor. Requires Ni(2+) as cofactor.

It catalyses the reaction 1,2-dihydroxy-5-(methylsulfanyl)pent-1-en-3-one + O2 = 3-(methylsulfanyl)propanoate + CO + formate + 2 H(+). The catalysed reaction is 1,2-dihydroxy-5-(methylsulfanyl)pent-1-en-3-one + O2 = 4-methylsulfanyl-2-oxobutanoate + formate + 2 H(+). The protein operates within amino-acid biosynthesis; L-methionine biosynthesis via salvage pathway; L-methionine from S-methyl-5-thio-alpha-D-ribose 1-phosphate: step 5/6. Functionally, catalyzes 2 different reactions between oxygen and the acireductone 1,2-dihydroxy-3-keto-5-methylthiopentene (DHK-MTPene) depending upon the metal bound in the active site. Fe-containing acireductone dioxygenase (Fe-ARD) produces formate and 2-keto-4-methylthiobutyrate (KMTB), the alpha-ketoacid precursor of methionine in the methionine recycle pathway. Ni-containing acireductone dioxygenase (Ni-ARD) produces methylthiopropionate, carbon monoxide and formate, and does not lie on the methionine recycle pathway. The sequence is that of Acireductone dioxygenase from Gluconobacter oxydans (strain 621H) (Gluconobacter suboxydans).